A 462-amino-acid polypeptide reads, in one-letter code: Phosphoglycerate kinase, chloroplastic (462 aa).

Residues 1–61 (MALSMKMRAN…AGRSRIVVEA (61 aa)) constitute a chloroplast transit peptide. (2R)-3-phosphoglycerate is bound by residues A83, D84, N86, R101, S123, H124, G126, R127, R183, H215, and R216. Residue G261 coordinates ADP. G261 provides a ligand contact to CDP. 2 residues coordinate AMP: K263 and K267. K267 is a binding site for ATP. G285 serves as a coordination point for ADP. G285 is a binding site for CDP. AMP contacts are provided by G286 and G358. The ATP site is built by G286 and G358. CDP is bound by residues G383 and F388. F388 lines the ADP pocket. E389 is a binding site for AMP. Residues E389, D420, and S421 each contribute to the ATP site. Mg(2+) is bound at residue D420.

It belongs to the phosphoglycerate kinase family. Monomer. Requires Mg(2+) as cofactor.

Its subcellular location is the plastid. It is found in the chloroplast. It carries out the reaction (2R)-3-phosphoglycerate + ATP = (2R)-3-phospho-glyceroyl phosphate + ADP. It participates in carbohydrate biosynthesis; Calvin cycle. The protein is Phosphoglycerate kinase, chloroplastic (PGK) of Volvox carteri (Green alga).